The primary structure comprises 241 residues: ATP synthase subunit a (241 aa).

5 helical membrane-spanning segments follow: residues 30–50 (GQVFLTSWIVIGAILALVVVG), 91–111 (FIGTLFLFIFVSNWGGSLVPW), 128–148 (INTTVALALLVSLSYFYAGLS), 193–213 (LVVAVLVFLVPLFLPVPVMFL), and 214–234 (GLFTSAIQALIFATLAAYYIG).

This sequence belongs to the ATPase A chain family. F-type ATPases have 2 components, CF(1) - the catalytic core - and CF(0) - the membrane proton channel. CF(1) has five subunits: alpha(3), beta(3), gamma(1), delta(1), epsilon(1). CF(0) has four main subunits: a, b, b' and c.

It localises to the cellular thylakoid membrane. Functionally, key component of the proton channel; it plays a direct role in the translocation of protons across the membrane. In Prochlorococcus marinus (strain MIT 9303), this protein is ATP synthase subunit a.